The following is a 381-amino-acid chain: Lipid-A-disaccharide synthase (381 aa).

This sequence belongs to the LpxB family.

It carries out the reaction 2-N,3-O-bis[(3R)-3-hydroxytetradecanoyl]-alpha-D-glucosaminyl 1-phosphate + UDP-2-N,3-O-bis[(3R)-3-hydroxytetradecanoyl]-alpha-D-glucosamine = lipid A disaccharide (E. coli) + UDP + H(+). The catalysed reaction is a lipid X + a UDP-2-N,3-O-bis[(3R)-3-hydroxyacyl]-alpha-D-glucosamine = a lipid A disaccharide + UDP + H(+). It participates in glycolipid biosynthesis; lipid IV(A) biosynthesis; lipid IV(A) from (3R)-3-hydroxytetradecanoyl-[acyl-carrier-protein] and UDP-N-acetyl-alpha-D-glucosamine: step 5/6. In terms of biological role, condensation of UDP-2,3-diacylglucosamine and 2,3-diacylglucosamine-1-phosphate to form lipid A disaccharide, a precursor of lipid A, a phosphorylated glycolipid that anchors the lipopolysaccharide to the outer membrane of the cell. The chain is Lipid-A-disaccharide synthase from Erwinia tasmaniensis (strain DSM 17950 / CFBP 7177 / CIP 109463 / NCPPB 4357 / Et1/99).